A 387-amino-acid chain; its full sequence is Cysteine desulfurase (387 aa).

Residues 72–73, asparagine 152, glutamine 180, and 200–202 each bind pyridoxal 5'-phosphate; these read GT and SAH. An N6-(pyridoxal phosphate)lysine modification is found at lysine 203. Pyridoxal 5'-phosphate is bound at residue threonine 238. Cysteine 326 (cysteine persulfide intermediate) is an active-site residue. Cysteine 326 contacts [2Fe-2S] cluster.

This sequence belongs to the class-V pyridoxal-phosphate-dependent aminotransferase family. NifS/IscS subfamily. In terms of assembly, homodimer. It depends on pyridoxal 5'-phosphate as a cofactor.

It carries out the reaction (sulfur carrier)-H + L-cysteine = (sulfur carrier)-SH + L-alanine. Functionally, catalyzes the removal of elemental sulfur atoms from cysteine to produce alanine. Seems to participate in the biosynthesis of the nitrogenase metalloclusters by providing the inorganic sulfur required for the Fe-S core formation. The sequence is that of Cysteine desulfurase from Sinorhizobium fredii (strain NBRC 101917 / NGR234).